The sequence spans 793 residues: Nuclear cap-binding protein subunit 1 (793 aa).

The MIF4G domain maps to 28–242; sequence EKKLQEVIGK…SLSAQIENLR (215 aa).

This sequence belongs to the NCBP1 family. In terms of assembly, component of the nuclear cap-binding complex (CBC), a heterodimer composed of ncbp-1 and ncbp-1 that interacts with m7GpppG-capped RNA.

The protein localises to the nucleus. Functionally, component of the cap-binding complex (CBC), which binds cotranscriptionally to the 5'-cap of pre-mRNAs and is involved in various processes such as pre-mRNA splicing and RNA-mediated gene silencing (RNAi). The CBC complex is involved in miRNA-mediated RNA interference and is required for primary microRNAs (miRNAs) processing. In the CBC complex, ncbp-1 does not bind directly capped RNAs (m7GpppG-capped RNA) but is required to stabilize the movement of the N-terminal loop of ncbp-2 and lock the CBC into a high affinity cap-binding state with the cap structure. This chain is Nuclear cap-binding protein subunit 1 (ncbp-1), found in Caenorhabditis briggsae.